Reading from the N-terminus, the 371-residue chain is Putative RNA-binding protein Luc7-like 1 (371 aa).

2 coiled-coil regions span residues 87-177 (MDHL…RNSM) and 218-259 (FIQI…LSRR). The segment covering 232-257 (VAEKQEKRNQDRLRRREEREREERLS) has biased composition (basic and acidic residues). Residues 232–371 (VAEKQEKRNQ…RSEEKEAGEI (140 aa)) form a disordered region. Residues 258–317 (RRSGSRTRDRRRSRSRDRRRRRSRSTSRERRKLSRSRSRDRHRRHRSRSRSHSRGHRRAS) are compositionally biased toward basic residues. Basic and acidic residues-rich tracts occupy residues 318 to 351 (RDRS…DWRL) and 361 to 371 (RRSEEKEAGEI). Residues Ser-332, Ser-336, and Ser-363 each carry the phosphoserine modification.

It belongs to the Luc7 family. In terms of tissue distribution, ubiquitous.

May bind to RNA via its Arg/Ser-rich domain. The chain is Putative RNA-binding protein Luc7-like 1 (LUC7L) from Homo sapiens (Human).